Reading from the N-terminus, the 2210-residue chain is MEESVNEIKNLIRKHFPERQELAYQRDIFLSQHHPSSLLLEGFKLLSSLVELESCEAHACQINSDQKFVDVILSDHGILCPTLPKVIPDGFKLTGKTLILLETFVRVNPDEFEKKWKSDMSKLLNLKSDLLRAGITLVPVVDGRSSYSNRFLADWVVERVRWLLIDILKKSKFMQEINIEEQEYQRLIHSLSNTKNQSLGLENIECLKKNSLGYDERLNESLFVGVRGDIRESVIREELIKLRFWFKKEIFDKQLGKFKFSQKSNLINDLVSLGSHKDSDVPSCPFCANKLMDVVYSIASHPIDEVNMKSQSDENSISIDAVERCYLQALSVCNKVKGLKVFNTRRNTLLFLDLVLLNLLCDLFKKHDDAIVRLRNAGIVVGQMLMLVNDRLLDILEAIKLIRKKLMTSPKWVQMCSRTLKNSHQDLWSQLEKLIKHPDMDSMMILAQALVSDRPVMRYTIDRESEKICRHQPFSSLVEGEQKKLFRILSSISLALVNSMKTSFSSRLLINEREYSRYFGNVRLRECYVQRFHLIKNTFGLLFYQKTGEKSRCYSIYLSINGVLEEQGSFYCDPKRFFLPIFSEDVLIEMCEEMTSWLDFSHELMTMTRPTLRLLVLAVLCSPSKRNQTFLQGLRYFLMAYANQIHHVDLMSKLRVDCMSGSEVLIQRMAVELFQTILSEGEDADLYFARRFKYLLNVSYLCHLVTKETPDRLTDQIKCFEKFIEPKVKFDCVVVNPPLNGSLTLEQEDIMIRGLDRFFSKEAKTSSDTQIPGVSKEILSFCISLFNRGRLKVTGELKSNPYRPNITSTALDLSSNKSVVIPKLDELGNILSVYDKEKLVSTCVSTMAERFKTKGRYNLDPDSMDYLILKNLTGLVSTGSRTRTNQEELSMMYESLTEDQVRAFEGIRNDVQMTLAKMANSEGSKVETTKLKSKNLSVDERESLESLWAPFGVLREIKAEVSMHEVKDFDPDVFRSDVYKELCDAVYLSPFKLTYFLEAPQDICPLGLLLKNLTTIAYQEDEFFECFKYLLIQGHYDQKLGSYEHRSRSRLGFSSEVLKLKDEVRLSTRESNSEAIADKLDKSYFTNAALRNLCFYSDDSPTEFTSISSNTGNLKFGLSYKEQVGSNRELYVGDLNTKLMTRLVEDFSEAVGSSMRYTCLNSEKEFERAICDMKMAVNNGDLSCSYDHSKWGPTMSPALFLSFLYTLELKNPRDRTKVNLEPVMNILKWHLHKVVEVPINVAEAYCVGKLKRSLGLMGCDCTSVGEEFFHQYLQSRDQVPSHIMSVLDMGQGILHNTSDLYGLITEQFLCYALDLLYDVIPVTYTSSDDQVSLIKIPCLSDEKCQDRTELLEMVCFHEFLSSKLNKFISPKSVIGTFVAEFKSRFFVMGEETPLLTKFVSAALHNVKCKTPTQLSETIDTICDQCIANGVSTHIVSKISIRVNQLIRYSGYRETPFGAIEEQDVKDWVDGSRGYRLQRKIEAIFSDDKETMFIRNCARKVFNDIKKGKIFEENLINLISRGGDEALSGFLQYAGCSEDEIRRTLDYRWVNLASFGDLRLVLRTKLMTSRRVLEKEEMPTLIKTIQSRLSRNFTKGVKKILAESINKSAFQSSVASGFIGFCKSMGSKCVRDGKGGFLYIKDIFTRIMPCLCEICEKKPKVIYCQKSLQEVNQFSKPILWDYFSLVLTNACELGEWVFSAVKSPQAPLVLCNKNFFWAVKPKAVRQIEDQLGMNHVLHSIRRNYPKLFEEHLAPFMNDLQVNRSLDSGRLKFLDVCVALDMMNENLGIISHLLKVRDNNVYIVKQSDCASAHVRQSEYTNWEVGISPQQVCRNFMVQVVLSSMINPLVMSTSCLKSFFWFNEVLDLEDDSQVDLAELTDFTLSIKNNKVSRAMFVEDIAMGYVVSSFDNIKVFLESVSVDNISLLPQEDMIDLHTVLRNVACQEAVKLKLIIQVEHTRVSTKFKLRRKMVYSYTIVSSLRVDDVSTPELELNVDAMSQCVSGSEGNHSLLDGALVIASLPLFTGHESFDLAGLFIDAGYAVTNDDNILSHVKLNFGDFYSELGNKYAYDLIGPNNPGEPLVLKEGIFYRGNERLSTYKVELSGDVIVKAIGALEDIDSVETLLCQLWPYLKTTSQTILFQQEDFVLVYDLHKEQLVRSLDKFGDWLEFSNFKVAFSRSLNDLLVSDPQGQFRLKGVTCRPLKHKVEIKDID.

The interval arginine 26–cysteine 284 is endonuclease. Positions 51, 89, and 102 each coordinate Mn(2+). Lysine 115 is an active-site residue. A RdRp catalytic domain is found at cysteine 1171 to isoleucine 1368. Aspartate 1329 is a Mg(2+) binding site.

This sequence belongs to the Bunyavirales RNA polymerase family. Homomultimer; the oligomeric structure is essential for the polymerase activity. Interacts with nucleoprotein N. Interacts with protein Z; this interaction inhibits viral transcription and replication, Z partially blocks the product exit tunnel for the releasing nascent RNA product. The cofactor is Mn(2+). It depends on Mg(2+) as a cofactor.

It is found in the virion. The protein resides in the host cytoplasm. It carries out the reaction RNA(n) + a ribonucleoside 5'-triphosphate = RNA(n+1) + diphosphate. RNA-dependent RNA polymerase, which is responsible for the replication and transcription of the viral RNA genome using antigenomic RNA as an intermediate. During transcription, synthesizes subgenomic RNAs and assures their capping by a cap-snatching mechanism, which involves the endonuclease activity cleaving the host capped pre-mRNAs. These short capped RNAs are then used as primers for viral transcription. The 3'-end of subgenomic mRNAs molecules are heterogeneous and not polyadenylated. The replicase function is to direct synthesis of antigenomic and genomic RNA which are encapsidated and non capped. As a consequence of the use of the same enzyme for both transcription and replication, these mechanisms need to be well coordinated. These processes may be regulated by proteins N and Z in a dose-dependent manner. Z protein inhibits the viral polymerase L und thus the viral transcription and RNA synthesis. The sequence is that of RNA-directed RNA polymerase L from Junin mammarenavirus (JUNV).